The chain runs to 258 residues: MSDLKAAALRALKLMDLTTLNDDDTDAKVIALCHDAKTPVGNTAAICIYPRFIPIAKKTLREQGTPEVRIATVTNFPHGNDDIEIAVAETKAAVAYGADEVDVVFPYRALMAGDEKVGFELVKQCKEACGDILLKVIIETGELKEEALIKKASQICIEAGADFIKTSTGKVPVNATPEYARMMLEVIRDMGVAEKVGFKPAGGVRTAEDAAAYLAMADDILGSEWADNMHYRFGASSLLTNLLNTLEVTDQVADPAAY.

Asp102 functions as the Proton donor/acceptor in the catalytic mechanism. The active-site Schiff-base intermediate with acetaldehyde is the Lys165. Catalysis depends on Lys199, which acts as the Proton donor/acceptor.

It belongs to the DeoC/FbaB aldolase family. DeoC type 2 subfamily.

It localises to the cytoplasm. The enzyme catalyses 2-deoxy-D-ribose 5-phosphate = D-glyceraldehyde 3-phosphate + acetaldehyde. The protein operates within carbohydrate degradation; 2-deoxy-D-ribose 1-phosphate degradation; D-glyceraldehyde 3-phosphate and acetaldehyde from 2-deoxy-alpha-D-ribose 1-phosphate: step 2/2. Functionally, catalyzes a reversible aldol reaction between acetaldehyde and D-glyceraldehyde 3-phosphate to generate 2-deoxy-D-ribose 5-phosphate. The chain is Deoxyribose-phosphate aldolase 2 (deoC2) from Vibrio vulnificus (strain YJ016).